The primary structure comprises 513 residues: Serine/threonine-protein kinase pakH (513 aa).

In terms of domain architecture, Protein kinase spans 42–294 (FEIQEKLGEG…PSQLLDHPFI (253 aa)). Residues 48–56 (LGEGSFGSV) and K71 each bind ATP. The active-site Proton acceptor is the D163. The segment at 313-358 (KSKKRKSIGPSVSPKQQPNDNNNNNNNNKPQFLSKLLNNNSNSSND) is disordered. The span at 331-357 (NDNNNNNNNNKPQFLSKLLNNNSNSSN) shows a compositional bias: low complexity. A helical membrane pass occupies residues 493-512 (IVLYSTLGLILVLSVFFKFF).

The protein belongs to the protein kinase superfamily. STE Ser/Thr protein kinase family. STE20 subfamily. Requires Mg(2+) as cofactor.

It localises to the membrane. The enzyme catalyses L-seryl-[protein] + ATP = O-phospho-L-seryl-[protein] + ADP + H(+). The catalysed reaction is L-threonyl-[protein] + ATP = O-phospho-L-threonyl-[protein] + ADP + H(+). The protein is Serine/threonine-protein kinase pakH (pakH-1) of Dictyostelium discoideum (Social amoeba).